A 281-amino-acid chain; its full sequence is Probable protein phosphatase 2C 9 (281 aa).

The PPM-type phosphatase domain maps to 33–280 (KYGFSLVKGK…DDISCVVVRF (248 aa)). Positions 70, 71, 232, and 271 each coordinate Mn(2+).

Belongs to the PP2C family. Interacts with phytochromes (via N-terminus). Mg(2+) serves as cofactor. The cofactor is Mn(2+).

It is found in the nucleus. It catalyses the reaction O-phospho-L-seryl-[protein] + H2O = L-seryl-[protein] + phosphate. It carries out the reaction O-phospho-L-threonyl-[protein] + H2O = L-threonyl-[protein] + phosphate. Involved in the regulation of phytochrome signaling. May regulate phytochrome-interacting factor 3 (PIF3) through the dephosphorylation of phytochrome. The polypeptide is Probable protein phosphatase 2C 9 (Arabidopsis thaliana (Mouse-ear cress)).